The following is a 447-amino-acid chain: Ribosomal protein uS12 methylthiotransferase RimO (447 aa).

Residues 4-114 enclose the MTTase N-terminal domain; sequence PKVGFVSLGC…VMEAVHEYVP (111 aa). [4Fe-4S] cluster contacts are provided by C13, C49, C78, C147, C151, and C154. In terms of domain architecture, Radical SAM core spans 133-370; it reads LTPKHYAYLK…MQVQQEISAA (238 aa). A TRAM domain is found at 373–443; sequence QKRIGQTMTV…EYDLFAKLIQ (71 aa).

This sequence belongs to the methylthiotransferase family. RimO subfamily. [4Fe-4S] cluster serves as cofactor.

The protein localises to the cytoplasm. The enzyme catalyses L-aspartate(89)-[ribosomal protein uS12]-hydrogen + (sulfur carrier)-SH + AH2 + 2 S-adenosyl-L-methionine = 3-methylsulfanyl-L-aspartate(89)-[ribosomal protein uS12]-hydrogen + (sulfur carrier)-H + 5'-deoxyadenosine + L-methionine + A + S-adenosyl-L-homocysteine + 2 H(+). Catalyzes the methylthiolation of an aspartic acid residue of ribosomal protein uS12. The polypeptide is Ribosomal protein uS12 methylthiotransferase RimO (Acinetobacter baylyi (strain ATCC 33305 / BD413 / ADP1)).